The following is a 488-amino-acid chain: Acetyl-CoA decarbonylase/synthase complex subunit gamma (488 aa).

Residues 1 to 61 (MPKKISAMDI…FEKNKKKIIE (61 aa)) form the 4Fe-4S domain. [4Fe-4S] cluster is bound by residues C19, C22, C27, and C44.

As to quaternary structure, heterodimer of delta and gamma chains. The ACDS complex is made up of alpha, epsilon, beta, gamma and delta chains with a probable stoichiometry of (alpha(2)epsilon(2))(4)-beta(8)-(gamma(1)delta(1))(8). Corrinoid serves as cofactor. It depends on [4Fe-4S] cluster as a cofactor.

The catalysed reaction is 5,6,7,8-tetrahydrosarcinapterin + methyl-Co(III)-[corrinoid Fe-S protein] = 5-methyltetrahydrosarcinapterin + Co(I)-[corrinoid Fe-S protein] + H(+). In terms of biological role, part of a complex that catalyzes the reversible cleavage of acetyl-CoA, allowing autotrophic growth from CO(2). This is Acetyl-CoA decarbonylase/synthase complex subunit gamma from Methanocaldococcus jannaschii (strain ATCC 43067 / DSM 2661 / JAL-1 / JCM 10045 / NBRC 100440) (Methanococcus jannaschii).